Consider the following 476-residue polypeptide: Proline--tRNA ligase (476 aa).

The protein belongs to the class-II aminoacyl-tRNA synthetase family. ProS type 3 subfamily. As to quaternary structure, homodimer.

It localises to the cytoplasm. The catalysed reaction is tRNA(Pro) + L-proline + ATP = L-prolyl-tRNA(Pro) + AMP + diphosphate. In terms of biological role, catalyzes the attachment of proline to tRNA(Pro) in a two-step reaction: proline is first activated by ATP to form Pro-AMP and then transferred to the acceptor end of tRNA(Pro). This is Proline--tRNA ligase from Mycoplasma mobile (strain ATCC 43663 / 163K / NCTC 11711) (Mesomycoplasma mobile).